The sequence spans 890 residues: Nucleoside hydrolase 3 (890 aa).

Residues 1–21 (MLTSPTLKSLWFLFTILGLLG) form the signal peptide. N-linked (GlcNAc...) asparagine glycosylation is found at asparagine 55, asparagine 232, asparagine 371, asparagine 485, asparagine 580, asparagine 655, and asparagine 740.

This sequence belongs to the IUNH family.

It is found in the secreted. Its subcellular location is the extracellular space. The protein resides in the apoplast. The catalysed reaction is a purine D-ribonucleoside + H2O = a purine nucleobase + D-ribose. It carries out the reaction inosine + H2O = hypoxanthine + D-ribose. It catalyses the reaction adenosine + H2O = D-ribose + adenine. Its function is as follows. Extracellular purine-specific hydrolase present in the apoplastic fluid involved in the degradation of extracellular nucleosides, including inosine and adenosine, and which may participate in wound and pathogen responses (e.g. Botrytis cinerea). The chain is Nucleoside hydrolase 3 from Arabidopsis thaliana (Mouse-ear cress).